We begin with the raw amino-acid sequence, 304 residues long: 33 kDa chaperonin (304 aa).

2 disulfides stabilise this stretch: Cys-236–Cys-238 and Cys-269–Cys-272.

It belongs to the HSP33 family. Post-translationally, under oxidizing conditions two disulfide bonds are formed involving the reactive cysteines. Under reducing conditions zinc is bound to the reactive cysteines and the protein is inactive.

It is found in the cytoplasm. Redox regulated molecular chaperone. Protects both thermally unfolding and oxidatively damaged proteins from irreversible aggregation. Plays an important role in the bacterial defense system toward oxidative stress. This chain is 33 kDa chaperonin, found in Pelobacter propionicus (strain DSM 2379 / NBRC 103807 / OttBd1).